A 490-amino-acid chain; its full sequence is Trigger factor (490 aa).

Positions 162 to 243 (GDFVSIDLSA…VGSIKERELP (82 aa)) constitute a PPIase FKBP-type domain. A disordered region spans residues 433-490 (VDAVLGPRRGGADEAGAEAEAAEEKPAKAKKSADSEKTDKSEKAEKKSKKKSKDDDAE). Positions 454-477 (AEEKPAKAKKSADSEKTDKSEKAE) are enriched in basic and acidic residues.

This sequence belongs to the FKBP-type PPIase family. Tig subfamily.

Its subcellular location is the cytoplasm. It catalyses the reaction [protein]-peptidylproline (omega=180) = [protein]-peptidylproline (omega=0). Functionally, involved in protein export. Acts as a chaperone by maintaining the newly synthesized protein in an open conformation. Functions as a peptidyl-prolyl cis-trans isomerase. The polypeptide is Trigger factor (Mycobacteroides abscessus (strain ATCC 19977 / DSM 44196 / CCUG 20993 / CIP 104536 / JCM 13569 / NCTC 13031 / TMC 1543 / L948) (Mycobacterium abscessus)).